A 526-amino-acid polypeptide reads, in one-letter code: GMP synthase [glutamine-hydrolyzing] (526 aa).

The Glutamine amidotransferase type-1 domain occupies 14-208; it reads SILIVDFGSQ…VHDICGLAGD (195 aa). The Nucleophile role is filled by Cys-91. Residues His-182 and Glu-184 contribute to the active site. The 193-residue stretch at 209–401 folds into the GMPS ATP-PPase domain; it reads WTMAEFRQTK…LGMPDVFVDR (193 aa). 236 to 242 contributes to the ATP binding site; it reads SGGVDSS.

Homodimer.

The enzyme catalyses XMP + L-glutamine + ATP + H2O = GMP + L-glutamate + AMP + diphosphate + 2 H(+). It functions in the pathway purine metabolism; GMP biosynthesis; GMP from XMP (L-Gln route): step 1/1. Functionally, catalyzes the synthesis of GMP from XMP. This chain is GMP synthase [glutamine-hydrolyzing], found in Zymomonas mobilis subsp. mobilis (strain ATCC 31821 / ZM4 / CP4).